A 291-amino-acid polypeptide reads, in one-letter code: MKVGVEAIRELRQITGAGLGDCKEALETCSGDMEKAKVYLREKGLSKAYKKSHRDAADGLVAVRVEGDKGAILKLGSETDFVARNEKFRSLAAELVSSLLKHGAEDLSSFSASPYDGGSGVSVADEVVNAAAVLGEHIVLSGIGFLELGGPGVIGSYIHGAVGEGIGRAGALVALEATTAKTEALLEFARQLAMHIVAAKPESVSVETLSNDIVEREREIVAKQVEALGKPESVASKIVDGRMQKFFEDMVLLEQTFIMDGSTKIRDLLHNKGQDLGCEVRIVAYRLFSVG.

Residues 79 to 82 are involved in Mg(2+) ion dislocation from EF-Tu; sequence TDFV.

It belongs to the EF-Ts family.

Its subcellular location is the cytoplasm. Associates with the EF-Tu.GDP complex and induces the exchange of GDP to GTP. It remains bound to the aminoacyl-tRNA.EF-Tu.GTP complex up to the GTP hydrolysis stage on the ribosome. This Anaplasma marginale (strain Florida) protein is Elongation factor Ts.